Consider the following 300-residue polypeptide: Ferredoxin/F(420)H(2)-dependent CoB-CoM heterodisulfide reductase subunit B (300 aa).

The protein belongs to the HdrB family. As to quaternary structure, the ferredoxin/F(420)H(2)-dependent CoB-CoM heterodisulfide reductase is composed of three subunits; HdrA2, HdrB2 and HdrC2. [4Fe-4S] cluster serves as cofactor.

It localises to the cytoplasm. The enzyme catalyses coenzyme B + coenzyme M + 2 oxidized [2Fe-2S]-[ferredoxin] = coenzyme M-coenzyme B heterodisulfide + 2 reduced [2Fe-2S]-[ferredoxin] + 2 H(+). The catalysed reaction is coenzyme B + 2 oxidized coenzyme F420-(gamma-L-Glu)(n) + coenzyme M + 2 reduced [2Fe-2S]-[ferredoxin] + 4 H(+) = coenzyme M-coenzyme B heterodisulfide + 2 reduced coenzyme F420-(gamma-L-Glu)(n) + 2 oxidized [2Fe-2S]-[ferredoxin]. Its pathway is cofactor metabolism; coenzyme M-coenzyme B heterodisulfide reduction; coenzyme B and coenzyme M from coenzyme M-coenzyme B heterodisulfide: step 1/1. Part of a complex that catalyzes the reversible reduction of CoM-S-S-CoB to the thiol-coenzymes H-S-CoM (coenzyme M) and H-S-CoB (coenzyme B). Catalyzes the transfer of electrons from ferredoxin to CoM-S-S-CoB during methanogenesis from acetate. Electrons transfer from ferredoxin to CoM-S-S-CoB via HdrA2, HdrC2 and HdrB2. In addition, the complex can use electron bifurcation to direct electron pairs from reduced coenzyme F420 towards the reduction of both ferredoxin and CoB-CoM heterodisulfide. This activity may take place during Fe(III)-dependent anaerobic methane oxidation. The polypeptide is Ferredoxin/F(420)H(2)-dependent CoB-CoM heterodisulfide reductase subunit B (Methanosarcina acetivorans (strain ATCC 35395 / DSM 2834 / JCM 12185 / C2A)).